Consider the following 295-residue polypeptide: Proline-rich protein 32 (295 aa).

Disordered stretches follow at residues 10–48 and 101–120; these read GHAP…GHPG and ATGE…SGQD.

This Bos taurus (Bovine) protein is Proline-rich protein 32 (PRR32).